We begin with the raw amino-acid sequence, 450 residues long: Tubulin alpha chain (450 aa).

Q11 lines the GTP pocket. K40 bears the N6-acetyllysine mark. GTP-binding residues include E71, S140, G144, T145, T179, N206, and N228. Position 71 (E71) interacts with Mg(2+). Residue E254 is part of the active site.

The protein belongs to the tubulin family. As to quaternary structure, dimer of alpha and beta chains. A typical microtubule is a hollow water-filled tube with an outer diameter of 25 nm and an inner diameter of 15 nM. Alpha-beta heterodimers associate head-to-tail to form protofilaments running lengthwise along the microtubule wall with the beta-tubulin subunit facing the microtubule plus end conferring a structural polarity. Microtubules usually have 13 protofilaments but different protofilament numbers can be found in some organisms and specialized cells. Mg(2+) serves as cofactor. Post-translationally, undergoes a tyrosination/detyrosination cycle, the cyclic removal and re-addition of a C-terminal tyrosine residue by the enzymes tubulin tyrosine carboxypeptidase (TTCP) and tubulin tyrosine ligase (TTL), respectively. In terms of processing, acetylation of alpha chains at Lys-40 stabilizes microtubules and affects affinity and processivity of microtubule motors. This modification has a role in multiple cellular functions, ranging from cell motility, cell cycle progression or cell differentiation to intracellular trafficking and signaling.

Its subcellular location is the cytoplasm. It is found in the cytoskeleton. The catalysed reaction is GTP + H2O = GDP + phosphate + H(+). Tubulin is the major constituent of microtubules, a cylinder consisting of laterally associated linear protofilaments composed of alpha- and beta-tubulin heterodimers. Microtubules grow by the addition of GTP-tubulin dimers to the microtubule end, where a stabilizing cap forms. Below the cap, tubulin dimers are in GDP-bound state, owing to GTPase activity of alpha-tubulin. In Haemonchus contortus (Barber pole worm), this protein is Tubulin alpha chain.